The primary structure comprises 428 residues: UPF0597 protein BF3772 (428 aa).

The protein belongs to the UPF0597 family.

This is UPF0597 protein BF3772 from Bacteroides fragilis (strain YCH46).